Here is a 668-residue protein sequence, read N- to C-terminus: Acyl-CoA-binding domain-containing protein 4 (668 aa).

The 95-residue stretch at 12–106 folds into the ACB domain; it reads YPERFYAAAS…LEEDDPGWYS (95 aa). An acyl-CoA-binding positions include K33, 48-52, and K74; that span reads YALYQ. Kelch repeat units lie at residues 195–242, 255–305, 307–356, 358–407, 408–456, and 463–508; these read KMYI…TLLA, KLLS…MVGK, LVIF…VHAE, FLLI…TIGE, NWFI…LVVS, and VLVA…VNNA. Phosphoserine occurs at positions 515 and 520. Residues 538–647 are a coiled coil; the sequence is KVEGNSERII…EQAAMNAKRQ (110 aa). A disordered region spans residues 639–668; the sequence is QAAMNAKRQGSGGVWGWLAGSPQEKDDDSP.

The protein belongs to the ACBP family. Interacts with RAP2-3/EBP, an ethylene-responsive element binding protein. As to expression, mostly expressed in roots, stems, and leaves, and, to a lower extent, in flowers and siliques.

Its subcellular location is the cytoplasm. In terms of biological role, binds medium- and long-chain acyl-CoA esters with very high affinity. Can interact in vitro with oleoyl-CoA, barely with palmitoyl-CoA, but not with arachidonyl-CoA. May function as an intracellular carrier of acyl-CoA esters. Plays a role in the biosynthesis of membrane lipids including galactolipids and phospholipids. The chain is Acyl-CoA-binding domain-containing protein 4 (ACBP4) from Arabidopsis thaliana (Mouse-ear cress).